The following is a 311-amino-acid chain: Purine nucleoside phosphorylase (311 aa).

An N-acetylserine modification is found at serine 2. Phosphate is bound by residues serine 46, histidine 81, 101–103, and alanine 134; that span reads RLH. Glutamate 219 is a binding site for a purine D-ribonucleoside. Serine 238 contacts phosphate. Asparagine 261 is a binding site for a purine D-ribonucleoside. Serine 275 is modified (phosphoserine).

Belongs to the PNP/MTAP phosphorylase family.

The catalysed reaction is a purine D-ribonucleoside + phosphate = a purine nucleobase + alpha-D-ribose 1-phosphate. Its pathway is purine metabolism; purine nucleoside salvage. In terms of biological role, the purine nucleoside phosphorylases catalyze the phosphorolytic breakdown of the N-glycosidic bond in the beta-(deoxy)ribonucleoside molecules, with the formation of the corresponding free purine bases and pentose-1-phosphate. Cleaves guanosine and inosine. This chain is Purine nucleoside phosphorylase (PNP1), found in Saccharomyces cerevisiae (strain ATCC 204508 / S288c) (Baker's yeast).